The sequence spans 93 residues: Putative pterin-4-alpha-carbinolamine dehydratase (93 aa).

It belongs to the pterin-4-alpha-carbinolamine dehydratase family.

It catalyses the reaction (4aS,6R)-4a-hydroxy-L-erythro-5,6,7,8-tetrahydrobiopterin = (6R)-L-erythro-6,7-dihydrobiopterin + H2O. The sequence is that of Putative pterin-4-alpha-carbinolamine dehydratase from Trichodesmium erythraeum (strain IMS101).